The sequence spans 522 residues: Maturase K (522 aa).

The protein belongs to the intron maturase 2 family. MatK subfamily.

The protein resides in the plastid. The protein localises to the chloroplast. Its function is as follows. Usually encoded in the trnK tRNA gene intron. Probably assists in splicing its own and other chloroplast group II introns. This is Maturase K from Tigridia pavonia (Mexican shell flower).